The primary structure comprises 237 residues: tRNA (guanine-N(7)-)-methyltransferase (237 aa).

The S-adenosyl-L-methionine site is built by Glu-68, Glu-93, Asp-120, and Asp-143. The active site involves Asp-143. Substrate contacts are provided by residues Lys-147, Asp-179, and 216-219 (TKFE).

This sequence belongs to the class I-like SAM-binding methyltransferase superfamily. TrmB family.

It catalyses the reaction guanosine(46) in tRNA + S-adenosyl-L-methionine = N(7)-methylguanosine(46) in tRNA + S-adenosyl-L-homocysteine. It participates in tRNA modification; N(7)-methylguanine-tRNA biosynthesis. Functionally, catalyzes the formation of N(7)-methylguanine at position 46 (m7G46) in tRNA. The chain is tRNA (guanine-N(7)-)-methyltransferase from Shewanella piezotolerans (strain WP3 / JCM 13877).